We begin with the raw amino-acid sequence, 203 residues long: Large ribosomal subunit protein bL25 (203 aa).

This sequence belongs to the bacterial ribosomal protein bL25 family. CTC subfamily. In terms of assembly, part of the 50S ribosomal subunit; part of the 5S rRNA/L5/L18/L25 subcomplex. Contacts the 5S rRNA. Binds to the 5S rRNA independently of L5 and L18.

This is one of the proteins that binds to the 5S RNA in the ribosome where it forms part of the central protuberance. This Pseudomonas syringae pv. tomato (strain ATCC BAA-871 / DC3000) protein is Large ribosomal subunit protein bL25.